The sequence spans 348 residues: Holliday junction branch migration complex subunit RuvB (348 aa).

The tract at residues 1–184 (MTLNRDMVSP…FGIVQRLEFY (184 aa)) is large ATPase domain (RuvB-L). Residues Leu-23, Arg-24, Gly-65, Lys-68, Thr-69, Thr-70, Arg-174, Tyr-184, and Arg-221 each coordinate ATP. Residue Thr-69 participates in Mg(2+) binding. The tract at residues 185 to 255 (AVDHLVLIVE…VAQKALDLLD (71 aa)) is small ATPAse domain (RuvB-S). Residues 258-348 (SHGFDTMDRK…QEVSDLFPNE (91 aa)) form a head domain (RuvB-H) region. DNA is bound by residues Arg-294, Arg-313, and Arg-318.

This sequence belongs to the RuvB family. In terms of assembly, homohexamer. Forms an RuvA(8)-RuvB(12)-Holliday junction (HJ) complex. HJ DNA is sandwiched between 2 RuvA tetramers; dsDNA enters through RuvA and exits via RuvB. An RuvB hexamer assembles on each DNA strand where it exits the tetramer. Each RuvB hexamer is contacted by two RuvA subunits (via domain III) on 2 adjacent RuvB subunits; this complex drives branch migration. In the full resolvosome a probable DNA-RuvA(4)-RuvB(12)-RuvC(2) complex forms which resolves the HJ.

It is found in the cytoplasm. It catalyses the reaction ATP + H2O = ADP + phosphate + H(+). In terms of biological role, the RuvA-RuvB-RuvC complex processes Holliday junction (HJ) DNA during genetic recombination and DNA repair, while the RuvA-RuvB complex plays an important role in the rescue of blocked DNA replication forks via replication fork reversal (RFR). RuvA specifically binds to HJ cruciform DNA, conferring on it an open structure. The RuvB hexamer acts as an ATP-dependent pump, pulling dsDNA into and through the RuvAB complex. RuvB forms 2 homohexamers on either side of HJ DNA bound by 1 or 2 RuvA tetramers; 4 subunits per hexamer contact DNA at a time. Coordinated motions by a converter formed by DNA-disengaged RuvB subunits stimulates ATP hydrolysis and nucleotide exchange. Immobilization of the converter enables RuvB to convert the ATP-contained energy into a lever motion, pulling 2 nucleotides of DNA out of the RuvA tetramer per ATP hydrolyzed, thus driving DNA branch migration. The RuvB motors rotate together with the DNA substrate, which together with the progressing nucleotide cycle form the mechanistic basis for DNA recombination by continuous HJ branch migration. Branch migration allows RuvC to scan DNA until it finds its consensus sequence, where it cleaves and resolves cruciform DNA. This Nitrosococcus oceani (strain ATCC 19707 / BCRC 17464 / JCM 30415 / NCIMB 11848 / C-107) protein is Holliday junction branch migration complex subunit RuvB.